The sequence spans 409 residues: Isovaleryl-CoA dehydrogenase, mitochondrial (409 aa).

Residues 1–22 (MAAAQRWLPGILRRGDGLARRL) constitute a mitochondrion transit peptide. FAD-binding positions include 151 to 160 (LAMSEPNSGS) and 184 to 186 (WCT). Ser160 serves as a coordination point for substrate. Substrate-binding positions include 206 to 207 (SK), Tyr261, and 268 to 271 (DLER). Glu270 acts as the Proton acceptor in catalysis. FAD is bound by residues Arg296, Gln307, and 364-368 (QCLGG). Residue 391 to 392 (AG) participates in substrate binding. Residue 393–395 (TSE) participates in FAD binding.

Belongs to the acyl-CoA dehydrogenase family. Homodimer. It depends on FAD as a cofactor.

Its subcellular location is the mitochondrion. The catalysed reaction is 3-methylbutanoyl-CoA + oxidized [electron-transfer flavoprotein] + H(+) = 3-methylbut-2-enoyl-CoA + reduced [electron-transfer flavoprotein]. It participates in amino-acid degradation; L-leucine degradation; (S)-3-hydroxy-3-methylglutaryl-CoA from 3-isovaleryl-CoA: step 1/3. This is Isovaleryl-CoA dehydrogenase, mitochondrial from Oryza sativa subsp. japonica (Rice).